Reading from the N-terminus, the 425-residue chain is Glutamyl-tRNA reductase (425 aa).

Residues 49 to 52 (TCNR), S107, 112 to 114 (EPQ), and Q118 contribute to the substrate site. The active-site Nucleophile is the C50. 187–192 (GAGETI) contributes to the NADP(+) binding site.

The protein belongs to the glutamyl-tRNA reductase family. As to quaternary structure, homodimer.

The enzyme catalyses (S)-4-amino-5-oxopentanoate + tRNA(Glu) + NADP(+) = L-glutamyl-tRNA(Glu) + NADPH + H(+). Its pathway is porphyrin-containing compound metabolism; protoporphyrin-IX biosynthesis; 5-aminolevulinate from L-glutamyl-tRNA(Glu): step 1/2. In terms of biological role, catalyzes the NADPH-dependent reduction of glutamyl-tRNA(Glu) to glutamate 1-semialdehyde (GSA). The protein is Glutamyl-tRNA reductase of Pseudomonas savastanoi pv. phaseolicola (strain 1448A / Race 6) (Pseudomonas syringae pv. phaseolicola (strain 1448A / Race 6)).